Reading from the N-terminus, the 161-residue chain is 2-C-methyl-D-erythritol 2,4-cyclodiphosphate synthase (161 aa).

D11 and H13 together coordinate a divalent metal cation. 4-CDP-2-C-methyl-D-erythritol 2-phosphate-binding positions include 11 to 13 and 37 to 38; these read DIH and HS. Residue H45 coordinates a divalent metal cation. 4-CDP-2-C-methyl-D-erythritol 2-phosphate contacts are provided by residues 59–61 and 135–138; these read DIG and TTNE.

It belongs to the IspF family. Homotrimer. A divalent metal cation serves as cofactor.

The catalysed reaction is 4-CDP-2-C-methyl-D-erythritol 2-phosphate = 2-C-methyl-D-erythritol 2,4-cyclic diphosphate + CMP. Its pathway is isoprenoid biosynthesis; isopentenyl diphosphate biosynthesis via DXP pathway; isopentenyl diphosphate from 1-deoxy-D-xylulose 5-phosphate: step 4/6. In terms of biological role, involved in the biosynthesis of isopentenyl diphosphate (IPP) and dimethylallyl diphosphate (DMAPP), two major building blocks of isoprenoid compounds. Catalyzes the conversion of 4-diphosphocytidyl-2-C-methyl-D-erythritol 2-phosphate (CDP-ME2P) to 2-C-methyl-D-erythritol 2,4-cyclodiphosphate (ME-CPP) with a corresponding release of cytidine 5-monophosphate (CMP). This chain is 2-C-methyl-D-erythritol 2,4-cyclodiphosphate synthase, found in Acaryochloris marina (strain MBIC 11017).